Reading from the N-terminus, the 1051-residue chain is Inactive tyrosine-protein kinase 7 (1051 aa).

An N-terminal signal peptide occupies residues 1-22 (MAALRALLLLLAVGAQAAIRFA). Ig-like C2-type domains lie at 23 to 105 (KEPY…ANAS), 115 to 204 (SVVL…DNFT), 213 to 298 (PQAV…KATL), 308 to 388 (PFSP…LSIT), 393 to 472 (PKWV…GSIE), 487 to 566 (PPPQ…ATVQ), and 573 to 661 (VTFK…AFLY). The Extracellular segment spans residues 23-685 (KEPYSQDALH…SHTPYKMIQT (663 aa)). An intrachain disulfide couples Cys40 to Cys88. N-linked (GlcNAc...) asparagine glycosylation occurs at Asn103. A disulfide bridge connects residues Cys137 and Cys187. N-linked (GlcNAc...) asparagine glycosylation is found at Asn202, Asn255, and Asn264. 5 disulfides stabilise this stretch: Cys234–Cys282, Cys326–Cys372, Cys414–Cys462, Cys505–Cys551, and Cys594–Cys645. Asn444, Asn548, and Asn627 each carry an N-linked (GlcNAc...) asparagine glycan. The chain crosses the membrane as a helical span at residues 686–706 (IGLSVGAAVAYIIIVLGLMFY). The Cytoplasmic segment spans residues 707-1051 (CKKRRKAKRL…LGDSPADSKA (345 aa)). The Protein kinase; inactive domain occupies 777–1048 (LQTITTLGRG…AAALGDSPAD (272 aa)).

The protein belongs to the protein kinase superfamily. Tyr protein kinase family. Insulin receptor subfamily. As to expression, expressed in bone marrow, spleen, bursa, thymus and brain. Weakly expressed in fibroblasts. Also expressed in embryonic liver.

The protein localises to the membrane. Functionally, inactive tyrosine kinase involved in Wnt signaling. pathway. In Gallus gallus (Chicken), this protein is Inactive tyrosine-protein kinase 7 (PTK7).